A 334-amino-acid chain; its full sequence is Phosphate acyltransferase (334 aa).

It belongs to the PlsX family. In terms of assembly, homodimer. Probably interacts with PlsY.

The protein localises to the cytoplasm. The enzyme catalyses a fatty acyl-[ACP] + phosphate = an acyl phosphate + holo-[ACP]. Its pathway is lipid metabolism; phospholipid metabolism. In terms of biological role, catalyzes the reversible formation of acyl-phosphate (acyl-PO(4)) from acyl-[acyl-carrier-protein] (acyl-ACP). This enzyme utilizes acyl-ACP as fatty acyl donor, but not acyl-CoA. The chain is Phosphate acyltransferase from Fervidobacterium nodosum (strain ATCC 35602 / DSM 5306 / Rt17-B1).